The following is an 86-amino-acid chain: Omega-theraphotoxin-Hhn1b (86 aa).

The signal sequence occupies residues 1-21; the sequence is MKSIVFVALFGLALLAVVCSA. Positions 22-50 are excised as a propeptide; the sequence is SEDAHKELLKEVVRAMVVDKTDAVQAEER. 3 disulfide bridges follow: Cys52–Cys66, Cys59–Cys71, and Cys65–Cys78.

The protein belongs to the neurotoxin 10 (Hwtx-1) family. 17 (Hntx-9) subfamily. In terms of tissue distribution, expressed by the venom gland.

Its subcellular location is the secreted. In terms of biological role, ion channel inhibitor. This Cyriopagopus hainanus (Chinese bird spider) protein is Omega-theraphotoxin-Hhn1b.